Reading from the N-terminus, the 810-residue chain is Sister chromatid cohesion 1 protein 2 (810 aa).

3 disordered regions span residues 200–244 (RDTT…LLEP), 273–315 (SHES…SECG), and 606–626 (MGAS…AETP). 2 stretches are compositionally biased toward basic and acidic residues: residues 220–234 (EPSR…HRED) and 273–310 (SHES…DRSL). A compositionally biased stretch (polar residues) spans 606-622 (MGASSTTSGTAHQTENA).

The protein belongs to the rad21 family. In terms of assembly, component of the cohesin complex. As to expression, low expression in shoots, buds, siliques, leaves and roots. Found in, but not limited to, actively dividing cells: in procambium, protoderm and ground meristem in roots, and in shoot and floral meristems.

The protein localises to the nucleus. May be involved in sister chromatid cohesion during mitosis. This chain is Sister chromatid cohesion 1 protein 2 (SYN2), found in Arabidopsis thaliana (Mouse-ear cress).